A 531-amino-acid chain; its full sequence is DnaJ homolog subfamily C member 21 (531 aa).

One can recognise a J domain in the interval 3–69; that stretch reads CHYEALGVRR…QERAWYDNHR (67 aa). Disordered stretches follow at residues 279–311, 327–474, and 502–531; these read FGDG…AELY, KAMK…VPAE, and KATG…RKNR. Acidic residues predominate over residues 281–311; it reads DGSDENEMEEHELKDEEDGKDSDEAEDAELY. Phosphoserine is present on residues Ser283 and Ser302. The C2H2-type 1 zinc-finger motif lies at 314-338; sequence LYCPACDKSFKTEKAMKNHEKSKKH. Acidic residues predominate over residues 364–375; it reads NPLDDNSEEEME. A Phosphoserine modification is found at Ser370. Basic residues predominate over residues 381–392; the sequence is KLSKKQKKKKQK. Residues 393–403 show a composition bias toward polar residues; it reads PAQNYDDNFNV. Residues 442–453 are compositionally biased toward basic and acidic residues; sequence KPCDDPKSEAKS. Over residues 455 to 464 the composition is skewed to basic residues; the sequence is PKPKGKKTKD. Residues 482–506 form a C2H2-type 2 zinc finger; sequence ISCTTCHSEFPSRNKLFDHLKATGH. Position 511 is a phosphoserine (Ser511). Residues 511-522 show a composition bias toward low complexity; that stretch reads SSSSLNSATSSQ.

In terms of assembly, interacts with HSPA8, PA2G4 and ZNF622. In terms of tissue distribution, expressed in brain, placenta, kidney and pancreas.

Its subcellular location is the cytoplasm. It is found in the nucleus. It localises to the nucleolus. May act as a co-chaperone for HSP70. May play a role in ribosomal RNA (rRNA) biogenesis, possibly in the maturation of the 60S subunit. Binds the precursor 45S rRNA. In Homo sapiens (Human), this protein is DnaJ homolog subfamily C member 21 (DNAJC21).